Reading from the N-terminus, the 399-residue chain is Elongation factor Tu (399 aa).

Positions 10–204 constitute a tr-type G domain; it reads KPHVNIGTIG…AVDEAIPEPE (195 aa). Positions 19 to 26 are G1; the sequence is GHVDHGKT. 19–26 contributes to the GTP binding site; the sequence is GHVDHGKT. Residue Thr26 coordinates Mg(2+). Residues 60-64 form a G2 region; the sequence is GITIN. The interval 81-84 is G3; it reads DCPG. Residues 81–85 and 136–139 each bind GTP; these read DCPGH and NKCD. A G4 region spans residues 136–139; sequence NKCD. Positions 174-176 are G5; sequence SGL.

It belongs to the TRAFAC class translation factor GTPase superfamily. Classic translation factor GTPase family. EF-Tu/EF-1A subfamily. As to quaternary structure, monomer.

It is found in the cytoplasm. The enzyme catalyses GTP + H2O = GDP + phosphate + H(+). Its function is as follows. GTP hydrolase that promotes the GTP-dependent binding of aminoacyl-tRNA to the A-site of ribosomes during protein biosynthesis. This Parasynechococcus marenigrum (strain WH8102) protein is Elongation factor Tu.